Consider the following 594-residue polypeptide: A-type ATP synthase subunit A (594 aa).

Residue 236-243 participates in ATP binding; it reads GPFGSGKT.

It belongs to the ATPase alpha/beta chains family. As to quaternary structure, has multiple subunits with at least A(3), B(3), C, D, E, F, H, I and proteolipid K(x).

Its subcellular location is the cell membrane. It carries out the reaction ATP + H2O + 4 H(+)(in) = ADP + phosphate + 5 H(+)(out). Component of the A-type ATP synthase that produces ATP from ADP in the presence of a proton gradient across the membrane. The A chain is the catalytic subunit. The protein is A-type ATP synthase subunit A of Pyrobaculum calidifontis (strain DSM 21063 / JCM 11548 / VA1).